We begin with the raw amino-acid sequence, 444 residues long: Pineal opsin (444 aa).

Residues 1-20 (MDALQESPPSHHSLPSALPS) are disordered. Residues 1-46 (MDALQESPPSHHSLPSALPSATGGNGTVATMHNPFERPLEGIAPWN) are Extracellular-facing. The segment covering 7–20 (SPPSHHSLPSALPS) has biased composition (low complexity). Asn25 carries an N-linked (GlcNAc...) asparagine glycan. Residues 47 to 71 (FTMLAALMGTITALSLGENFAVIVV) form a helical membrane-spanning segment. The Cytoplasmic segment spans residues 72–83 (TARFRQLRQPLN). A helical transmembrane segment spans residues 84–108 (YVLVNLAAADLLVSAIGGSVSFFTN). Residues 109–123 (IKGYFFLGVHACVLE) are Extracellular-facing. A disulfide bridge links Cys120 with Cys197. A helical membrane pass occupies residues 124-143 (GFAVTYFGVVALWSLALLAF). Residues 144–162 (ERYFVICRPLGNFRLQSKH) are Cytoplasmic-facing. A helical membrane pass occupies residues 163 to 186 (AVLGLAVVWVFSLACTLPPVLGWS). Residues 187-210 (SYRPSMIGTTCEPNWYSGELHDHT) are Extracellular-facing. Residues 211–238 (FILMFFSTCFIFPLAVIFFSYGKLIQKL) form a helical membrane-spanning segment. At 239–260 (KKASETQRGLESTRRAEQQVTR) the chain is on the cytoplasmic side. The helical transmembrane segment at 261-284 (MVVVMILAFLVCWMPYATFSIVVT) threads the bilayer. Residues 285 to 292 (ACPTIHLD) lie on the Extracellular side of the membrane. Residues 293-317 (PLLAAVPAFFSKTATVYNPVIYIFM) traverse the membrane as a helical segment. At Lys304 the chain carries N6-(retinylidene)lysine. Residues 318–444 (NKQFRDCFVQ…SESVSKICPV (127 aa)) lie on the Cytoplasmic side of the membrane. A lipid anchor (S-palmitoyl cysteine) is attached at Cys331. Disordered stretches follow at residues 341-360 (QTAG…QSPG) and 388-420 (EPTM…QQGT). The span at 409 to 419 (QQQGQQQQQQG) shows a compositional bias: low complexity.

Belongs to the G-protein coupled receptor 1 family. Opsin subfamily. In terms of processing, phosphorylated on some or all of the serine and threonine residues present in the C-terminal region. Pineal gland.

Its subcellular location is the membrane. In Petromyzon marinus (Sea lamprey), this protein is Pineal opsin.